The following is a 625-amino-acid chain: Vicilin-like antimicrobial peptides 2-3 (625 aa).

Disordered stretches follow at residues Gln120–Glu152 and Arg180–Tyr212. Over residues Arg198–Tyr212 the composition is skewed to basic and acidic residues. 2 consecutive Cupin type-1 domains span residues Ser230–Arg369 and Tyr414–Glu584. A disordered region spans residues Ile594 to Gln614. Residues Gln601–Gln614 show a composition bias toward low complexity.

Belongs to the 7S seed storage protein family.

The protein resides in the secreted. Its function is as follows. Antimicrobial peptides 2b, 2c and 2d have antibacterial and antifungal activity against a range of species. The polypeptide is Vicilin-like antimicrobial peptides 2-3 (Macadamia integrifolia (Macadamia nut)).